Reading from the N-terminus, the 118-residue chain is Large ribosomal subunit protein uL18 (118 aa).

Belongs to the universal ribosomal protein uL18 family. In terms of assembly, part of the 50S ribosomal subunit; part of the 5S rRNA/L5/L18/L25 subcomplex. Contacts the 5S and 23S rRNAs.

In terms of biological role, this is one of the proteins that bind and probably mediate the attachment of the 5S RNA into the large ribosomal subunit, where it forms part of the central protuberance. This Parvibaculum lavamentivorans (strain DS-1 / DSM 13023 / NCIMB 13966) protein is Large ribosomal subunit protein uL18.